Consider the following 249-residue polypeptide: Enolase-phosphatase E1 (249 aa).

D14 and E16 together coordinate Mg(2+). Substrate is bound by residues S141–S142 and K175. Residue D200 participates in Mg(2+) binding.

The protein belongs to the HAD-like hydrolase superfamily. MasA/MtnC family. In terms of assembly, monomer. It depends on Mg(2+) as a cofactor.

It is found in the cytoplasm. It localises to the nucleus. It catalyses the reaction 5-methylsulfanyl-2,3-dioxopentyl phosphate + H2O = 1,2-dihydroxy-5-(methylsulfanyl)pent-1-en-3-one + phosphate. It participates in amino-acid biosynthesis; L-methionine biosynthesis via salvage pathway; L-methionine from S-methyl-5-thio-alpha-D-ribose 1-phosphate: step 3/6. It functions in the pathway amino-acid biosynthesis; L-methionine biosynthesis via salvage pathway; L-methionine from S-methyl-5-thio-alpha-D-ribose 1-phosphate: step 4/6. Functionally, bifunctional enzyme that catalyzes the enolization of 2,3-diketo-5-methylthiopentyl-1-phosphate (DK-MTP-1-P) into the intermediate 2-hydroxy-3-keto-5-methylthiopentenyl-1-phosphate (HK-MTPenyl-1-P), which is then dephosphorylated to form the acireductone 1,2-dihydroxy-3-keto-5-methylthiopentene (DHK-MTPene). This Drosophila mojavensis (Fruit fly) protein is Enolase-phosphatase E1.